Consider the following 127-residue polypeptide: Small ribosomal subunit protein uS11 (127 aa).

The protein belongs to the universal ribosomal protein uS11 family. In terms of assembly, part of the 30S ribosomal subunit. Interacts with proteins S7 and S18. Binds to IF-3.

Its function is as follows. Located on the platform of the 30S subunit, it bridges several disparate RNA helices of the 16S rRNA. Forms part of the Shine-Dalgarno cleft in the 70S ribosome. The sequence is that of Small ribosomal subunit protein uS11 from Rickettsia rickettsii (strain Iowa).